We begin with the raw amino-acid sequence, 172 residues long: NAD(P)H-quinone oxidoreductase subunit I, chloroplastic (172 aa).

4Fe-4S ferredoxin-type domains follow at residues Gly-55–Lys-84 and Leu-95–Glu-124. Positions 64, 67, 70, 74, 104, 107, 110, and 114 each coordinate [4Fe-4S] cluster.

The protein belongs to the complex I 23 kDa subunit family. In terms of assembly, NDH is composed of at least 16 different subunits, 5 of which are encoded in the nucleus. The cofactor is [4Fe-4S] cluster.

It localises to the plastid. The protein localises to the chloroplast thylakoid membrane. The catalysed reaction is a plastoquinone + NADH + (n+1) H(+)(in) = a plastoquinol + NAD(+) + n H(+)(out). The enzyme catalyses a plastoquinone + NADPH + (n+1) H(+)(in) = a plastoquinol + NADP(+) + n H(+)(out). Functionally, NDH shuttles electrons from NAD(P)H:plastoquinone, via FMN and iron-sulfur (Fe-S) centers, to quinones in the photosynthetic chain and possibly in a chloroplast respiratory chain. The immediate electron acceptor for the enzyme in this species is believed to be plastoquinone. Couples the redox reaction to proton translocation, and thus conserves the redox energy in a proton gradient. This is NAD(P)H-quinone oxidoreductase subunit I, chloroplastic from Arabidopsis thaliana (Mouse-ear cress).